The primary structure comprises 1390 residues: MVKEQFRETDVAKKISHICFGMKSPEEMRQQAHIQVVSKNLYSQDNQHAPLLYGVLDHRMGTSEKDRPCETCGKNLADCLGHYGYIDLELPCFHVGYFRAVIGILQMICKTCCHIMLSQEEKKQFLDYLKRPGLTYLQKRGLKKKISDKCRKKNICHHCGAFNGTVKKCGLLKIIHEKYKTNKKVVDPIVSNFLQSFETAIEHNKEVEPLLGRAQENLNPLVVLNLFKRIPAEDVPLLLMNPEAGKPSDLILTRLLVPPLCIRPSVVSDLKSGTNEDDLTMKLTEIIFLNDVIKKHRISGAKTQMIMEDWDFLQLQCALYINSELSGIPLNMAPKKWTRGFVQRLKGKQGRFRGNLSGKRVDFSGRTVISPDPNLRIDEVAVPVHVAKILTFPEKVNKANINFLRKLVQNGPEVHPGANFIQQRHTQMKRFLKYGNREKMAQELKYGDIVERHLIDGDVVLFNRQPSLHKLSIMAHLARVKPHRTFRFNECVCTPYNADFDGDEMNLHLPQTEEAKAEALVLMGTKANLVTPRNGEPLIAAIQDFLTGAYLLTLKDTFFDRAKACQIIASILVGKDEKIKVRLPPPTILKPVTLWTGKQIFSVILRPSDDNPVRANLRTKGKQYCGKGEDLCANDSYVTIQNSELMSGSMDKGTLGSGSKNNIFYILLRDWGQNEAADAMSRLARLAPVYLSNRGFSIGIGDVTPGQGLLKAKYELLNAGYKKCDEYIEALNTGKLQQQPGCTAEETLEALILKELSVIRDHAGSACLRELDKSNSPLTMALCGSKGSFINISQMIACVGQQAISGSRVPDGFENRSLPHFEKHSKLPAAKGFVANSFYSGLTPTEFFFHTMAGREGLVDTAVKTAETGYMQRRLVKSLEDLCSQYDLTVRSSTGDIIQFIYGGDGLDPAAMEGKDEPLEFKRVLDNIKAVFPCPSEPALSKNELILTTESIMKKSEFLCCQDSFLQEIKKFIKGVSEKIKKTRDKYGINDNGTTEPRVLYQLDRITPTQVEKFLETCRDKYMRAQMEPGSAVGALCAQSIGEPGTQMTLKTFHFAGVASMNITLGVPRIKEIINASKAISTPIITAQLDKDDDADYARLVKGRIEKTLLGEISEYIEEVFLPDDCFILVKLSLERIRLLRLEVNAETVRYSICTSKLRVKPGDVAVHGEAVVCVTPRENSKSSMYYVLQFLKEDLPKVVVQGIPEVSRAVIHIDEQSGKEKYKLLVEGDNLRAVMATHGVKGTRTTSNNTYEVEKTLGIEAARTTIINEIQYTMVNHGMSIDRRHVMLLSDLMTYKGEVLGITRFGLAKMKESVLMLASFEKTADHLFDAAYFGQKDSVCGVSECIIMGIPMNIGTGLFKLLHKADRDPNPPKRPLIFDTNEFHIPLVT.

Residues cysteine 69, cysteine 72, cysteine 79, histidine 82, cysteine 109, and cysteine 112 each coordinate Zn(2+). A DNA-binding site is contributed by lysine 144. Zn(2+) contacts are provided by cysteine 156 and cysteine 159. Residues lysine 167, serine 326, lysine 348, arginine 353, arginine 360, and arginine 366 each contribute to the DNA site. Position 445 is an N6-acetyllysine (lysine 445). Position 464 (arginine 464) interacts with RNA. Residues aspartate 499, aspartate 501, and aspartate 503 each contribute to the Mg(2+) site. Residue aspartate 503 participates in RNA binding. The tract at residues 843-884 (TPTEFFFHTMAGREGLVDTAVKTAETGYMQRRLVKSLEDLCS) is bridging helix. Positions 1029–1070 (PGSAVGALCAQSIGEPGTQMTLKTFHFAGVASMNITLGVPRI) are trigger loop. Residues arginine 1159, arginine 1305, and lysine 1323 each contribute to the DNA site.

The protein belongs to the RNA polymerase beta' chain family. Component of the RNA polymerase III (Pol III) (Pol III) complex consisting of 17 subunits: a ten-subunit catalytic core composed of POLR3A/RPC1, POLR3B/RPC2, POLR1C/RPAC1, POLR1D/RPAC2, POLR3K/RPC10, POLR2E/RPABC1, POLR2F/RPABC2, POLR2H/RPABC3, POLR2K/RPABC4 and POLR2L/RPABC5; a mobile stalk composed of two subunits POLR3H/RPC8 and CRCP/RPC9, protruding from the core and functioning primarily in transcription initiation; and additional subunits homologous to general transcription factors of the RNA polymerase II machinery, POLR3C/RPC3-POLR3F/RPC6-POLR3G/RPC7 heterotrimer required for transcription initiation and POLR3D/RPC4-POLR3E/RPC5 heterodimer involved in both transcription initiation and termination. Pol III exists as two alternative complexes defined by the mutually exclusive incorporation of subunit POLR3G/RPC7alpha or POLR3GL/RPC7beta. The presence of POLR3G/RPC7alpha or POLR3GL/RPC7beta differentially modulates the transcription potential of Pol III, with POLR3G/RPC7alpha specifically associated with transcription of snaR-A non-coding RNAs. As part of the RNA polymerase III complex, interacts with PKP2. It depends on Mg(2+) as a cofactor. Expressed in the brain, in the cortex and the white matter (at protein level).

Its subcellular location is the nucleus. It localises to the cytoplasm. The protein localises to the cytosol. It catalyses the reaction RNA(n) + a ribonucleoside 5'-triphosphate = RNA(n+1) + diphosphate. Catalytic core component of RNA polymerase III (Pol III), a DNA-dependent RNA polymerase which synthesizes small non-coding RNAs using the four ribonucleoside triphosphates as substrates. Synthesizes 5S rRNA, snRNAs, tRNAs and miRNAs from at least 500 distinct genomic loci. Pol III-mediated transcription cycle proceeds through transcription initiation, transcription elongation and transcription termination stages. During transcription initiation, Pol III is recruited to DNA promoters type I, II or III with the help of general transcription factors and other specific initiation factors. Once the polymerase has escaped from the promoter it enters the elongation phase during which RNA is actively polymerized, based on complementarity with the template DNA strand. Transcription termination involves the release of the RNA transcript and polymerase from the DNA. Forms Pol III active center together with the second largest subunit POLR3B/RPC2. Appends one nucleotide at a time to the 3' end of the nascent RNA, with POLR3A/RPC1 contributing a Mg(2+)-coordinating DxDGD motif, and POLR3B/RPC2 participating in the coordination of a second Mg(2+) ion and providing lysine residues believed to facilitate Watson-Crick base pairing between the incoming nucleotide and template base. Typically, Mg(2+) ions direct a 5' nucleoside triphosphate to form a phosphodiester bond with the 3' hydroxyl of the preceding nucleotide of the nascent RNA, with the elimination of pyrophosphate. Pol III plays a key role in sensing and limiting infection by intracellular bacteria and DNA viruses. Acts as a nuclear and cytosolic DNA sensor involved in innate immune response. Can sense non-self dsDNA that serves as template for transcription into dsRNA. The non-self RNA polymerase III transcripts, such as Epstein-Barr virus-encoded RNAs (EBERs) induce type I interferon and NF-kappa-B through the RIG-I pathway. This chain is DNA-directed RNA polymerase III subunit RPC1, found in Homo sapiens (Human).